Reading from the N-terminus, the 122-residue chain is Large ribosomal subunit protein uL14 (122 aa).

The protein belongs to the universal ribosomal protein uL14 family. Part of the 50S ribosomal subunit. Forms a cluster with proteins L3 and L19. In the 70S ribosome, L14 and L19 interact and together make contacts with the 16S rRNA in bridges B5 and B8.

Binds to 23S rRNA. Forms part of two intersubunit bridges in the 70S ribosome. The chain is Large ribosomal subunit protein uL14 from Shewanella loihica (strain ATCC BAA-1088 / PV-4).